The chain runs to 432 residues: Serine/threonine-protein phosphatase 2A activator 1 (432 aa).

The disordered stretch occupies residues 322 to 432 (PYSKVEDEEP…MAPTKAPWAK (111 aa)). Residues 366-389 (TVERLARRDGQRAAREKEEREDRA) are compositionally biased toward basic and acidic residues. Positions 396 to 412 (TTGAPGATALPPTRAPG) are enriched in low complexity.

Belongs to the PTPA-type PPIase family.

The protein resides in the cytoplasm. It is found in the nucleus. The enzyme catalyses [protein]-peptidylproline (omega=180) = [protein]-peptidylproline (omega=0). PPIases accelerate the folding of proteins. It catalyzes the cis-trans isomerization of proline imidic peptide bonds in oligopeptides. Acts as a regulatory subunit for PP2A-like phosphatases modulating their activity or substrate specificity, probably by inducing a conformational change in the catalytic subunit, a direct target of the PPIase. Can reactivate inactive phosphatase PP2A-phosphatase methylesterase complexes (PP2Ai) in presence of ATP and Mg(2+) by dissociating the inactive form from the complex. The protein is Serine/threonine-protein phosphatase 2A activator 1 (RRD1) of Yarrowia lipolytica (strain CLIB 122 / E 150) (Yeast).